The following is a 217-amino-acid chain: Large ribosomal subunit protein uL3 (217 aa).

Residues 137–160 form a disordered region; it reads VSASHGSHRNHRKPGSIGASSTPS.

This sequence belongs to the universal ribosomal protein uL3 family. In terms of assembly, part of the 50S ribosomal subunit. Forms a cluster with proteins L14 and L19.

One of the primary rRNA binding proteins, it binds directly near the 3'-end of the 23S rRNA, where it nucleates assembly of the 50S subunit. The protein is Large ribosomal subunit protein uL3 of Clavibacter michiganensis subsp. michiganensis (strain NCPPB 382).